The primary structure comprises 294 residues: 2-dehydropantoate 2-reductase (294 aa).

NADP(+) contacts are provided by residues 10–15 (GAGALG), arginine 34, lysine 74, asparagine 98, and alanine 122. The active-site Proton donor is the lysine 178. Residues lysine 178, asparagine 182, asparagine 186, asparagine 196, and 243-246 (NRSS) each bind substrate. Position 258 (glutamate 258) interacts with NADP(+).

Belongs to the ketopantoate reductase family.

The protein resides in the cytoplasm. The catalysed reaction is (R)-pantoate + NAD(+) = 2-dehydropantoate + NADH + H(+). It carries out the reaction (R)-pantoate + NADP(+) = 2-dehydropantoate + NADPH + H(+). It functions in the pathway cofactor biosynthesis; coenzyme A biosynthesis. Functionally, catalyzes the NAD(P)H-dependent reduction of ketopantoate into pantoic acid. This chain is 2-dehydropantoate 2-reductase, found in Archaeoglobus fulgidus (strain ATCC 49558 / DSM 4304 / JCM 9628 / NBRC 100126 / VC-16).